The following is a 370-amino-acid chain: Notoamide biosynthesis cluster protein J (370 aa).

The signal sequence occupies residues 1–22; the sequence is MRIMSIMLHLLATILLSSAVSA. N-linked (GlcNAc...) asparagine glycans are attached at residues N159, N167, N192, N235, N282, N340, and N346.

Part of the gene cluster that mediates the biosynthesis of notoamide, a fungal indole alkaloid that belongs to a family of natural products containing a characteristic bicyclo[2.2.2]diazaoctane core. The first step of notoamide biosynthesis involves coupling of L-proline and L-tryptophan by the bimodular NRPS notE, to produce cyclo-L-tryptophan-L-proline called brevianamide F. The reverse prenyltransferase notF then acts as a deoxybrevianamide E synthase and converts brevianamide F to deoxybrevianamide E via reverse prenylation at C-2 of the indole ring leading to the bicyclo[2.2.2]diazaoctane core. Deoxybrevianamide E is further hydroxylated at C-6 of the indole ring, likely catalyzed by the cytochrome P450 monooxygenase notG, to yield 6-hydroxy-deoxybrevianamide E. 6-hydroxy-deoxybrevianamide E is a specific substrate of the prenyltransferase notC for normal prenylation at C-7 to produce 6-hydroxy-7-prenyl-deoxybrevianamide, also called notoamide S. As the proposed pivotal branching point in notoamide biosynthesis, notoamide S can be diverted to notoamide E through an oxidative pyran ring closure putatively catalyzed by either notH cytochrome P450 monooxygenase or the notD FAD-linked oxidoreductase. This step would be followed by an indole 2,3-epoxidation-initiated pinacol-like rearrangement catalyzed by the notB FAD-dependent monooxygenase leading to the formation of notoamide C and notoamide D. On the other hand notoamide S is converted to notoamide T by notH (or notD), a bifunctional oxidase that also functions as the intramolecular Diels-Alderase responsible for generation of (+)-notoamide T. To generate antipodal (-)-notoaminide T, notH' (or notD') in Aspergillus versicolor is expected to catalyze a Diels-Alder reaction leading to the opposite stereochemistry. The remaining oxidoreductase notD (or notH) likely catalyzes the oxidative pyran ring formation to yield (+)-stephacidin A. The FAD-dependent monooxygenase notI is highly similar to notB and is predicted to catalyze a similar conversion from (+)-stephacidin A to (-)-notoamide B via the 2,3-epoxidation of (+)-stephacidin A followed by a pinacol-type rearrangement. Finally, it remains unclear which enzyme could be responsible for the final hydroxylation steps leading to notoamide A and sclerotiamide. The function of notJ in the notoamide biosynthesis has not been determined yet. The sequence is that of Notoamide biosynthesis cluster protein J from Aspergillus sp. (strain MF297-2).